A 101-amino-acid polypeptide reads, in one-letter code: Enhancer of yellow 2 transcription factor (101 aa).

This sequence belongs to the ENY2 family. Component of the nuclear pore complex (NPC)-associated AMEX complex (anchoring and mRNA export complex), composed of at least e(y)2 and xmas-2. Component of the SAGA transcription coactivator-HAT complexes, at least composed of Ada2b, e(y)2, Pcaf/Gcn5, Taf10 and Nipped-A/Trrap. Within the SAGA complex, e(y)2, Sgf11, and not/nonstop form an additional subcomplex of SAGA called the DUB module (deubiquitination module). Component of the THO complex, composed of at least e(y)2, HPR1, THO2, THOC5, THOC6 and THOC7. Interacts with e(y)1. Interacts with su(Hw) (via zinc fingers). Interacts with xmas-2; required for localization to the nuclear periphery. Interacts with the nuclear pore complex (NPC).

The protein resides in the nucleus. It localises to the nucleoplasm. Its subcellular location is the cytoplasm. Involved in mRNA export coupled transcription activation by association with both the AMEX and the SAGA complexes. The SAGA complex is a multiprotein complex that activates transcription by remodeling chromatin and mediating histone acetylation and deubiquitination. Within the SAGA complex, participates in a subcomplex that specifically deubiquitinates histone H2B. The SAGA complex is recruited to specific gene promoters by activators, where it is required for transcription. Required for nuclear receptor-mediated transactivation. Involved in transcription elongation by recruiting the THO complex onto nascent mRNA. The AMEX complex functions in docking export-competent ribonucleoprotein particles (mRNPs) to the nuclear entrance of the nuclear pore complex (nuclear basket). AMEX participates in mRNA export and accurate chromatin positioning in the nucleus by tethering genes to the nuclear periphery. The polypeptide is Enhancer of yellow 2 transcription factor (Drosophila erecta (Fruit fly)).